A 379-amino-acid polypeptide reads, in one-letter code: Alcohol dehydrogenase 1 (379 aa).

Zn(2+)-binding residues include Cys-47, Thr-49, His-69, Cys-99, Cys-102, Cys-105, Cys-113, and Cys-177. 2 residues coordinate an alcohol: Thr-49 and His-69. An NAD(+)-binding site is contributed by Thr-49. NAD(+) contacts are provided by residues 202–207 (GLGAVG), Asp-226, Arg-231, Thr-272, Val-295, 295–297 (VGV), Phe-322, and Arg-372.

This sequence belongs to the zinc-containing alcohol dehydrogenase family. Homodimer. Zn(2+) is required as a cofactor.

The protein localises to the cytoplasm. It catalyses the reaction a primary alcohol + NAD(+) = an aldehyde + NADH + H(+). It carries out the reaction a secondary alcohol + NAD(+) = a ketone + NADH + H(+). This is Alcohol dehydrogenase 1 (ADH1) from Oryza sativa subsp. indica (Rice).